Here is a 172-residue protein sequence, read N- to C-terminus: L-amino acid N-acyltransferase MnaT (172 aa).

An N-acetyltransferase domain is found at 1 to 163; that stretch reads MSIRFARKAD…DLTFMQLQLD (163 aa). Residues 85–87, 93–98, Asn124, and Ser133 each bind acetyl-CoA; these read VYV and GKGLGR.

Belongs to the acetyltransferase family. PAT/BAR subfamily.

The enzyme catalyses L-methionine + acetyl-CoA = N-acetyl-L-methionine + CoA + H(+). It catalyses the reaction propanoyl-CoA + L-methionine = N-propanoyl-L-methioninate + CoA + H(+). The catalysed reaction is L-alpha-phenylglycine + acetyl-CoA = N-acetyl-L-alpha-phenylglycine + CoA + H(+). It carries out the reaction L-methionine sulfoximine + acetyl-CoA = N-acetyl-L-methionine sulfoximine + CoA + H(+). The enzyme catalyses L-methionine sulfone + acetyl-CoA = N-acetyl-L-methionine sulfone + CoA + H(+). In terms of biological role, acyltransferase that appears to be required for E.coli optimal growth rate and yield via the formation of N-acetylated amino acids. Catalyzes the acylation of L-methionine using acetyl-CoA or propanoyl-CoA as acyl donors, and the acetylation of L-phenylglycine. Is also able to N-acylate other free L-amino acids and their derivatives using a CoA thioester as cosubstrate. Using acetyl-CoA as an acyl donor, substrate specificity is methionine sulfone &gt; methionine sulfoximine &gt; methionine sulfoxide &gt; methionine. Asparagine, lysine, glutamine, aspartate and glutamate are very poor substrates. Using methionine as a substrate, acyl donor preference is propanoyl-CoA &gt; acetyl-CoA &gt;&gt; butyryl-CoA. Likely plays a role in the resistance against the toxic effects of L-methionine sulfoximine (MSX), via its ability to catalyze its acetylation; MSX is a rare amino acid which inhibits glutamine synthetase (GlnA). The sequence is that of L-amino acid N-acyltransferase MnaT from Escherichia coli (strain K12).